Consider the following 440-residue polypeptide: GTPase Der (440 aa).

2 consecutive EngA-type G domains span residues 4–168 (PVVA…PPEK) and 177–352 (IKIA…GRHS). GTP is bound by residues 10-17 (GRPNVGKS), 57-61 (DTGGL), 120-123 (NKVE), 183-190 (GRPNVGKS), 230-234 (DTAGM), and 295-298 (NKWD). A KH-like domain is found at 353–437 (MRISTPGLNA…PIRFVLRKKT (85 aa)).

Belongs to the TRAFAC class TrmE-Era-EngA-EngB-Septin-like GTPase superfamily. EngA (Der) GTPase family. As to quaternary structure, associates with the 50S ribosomal subunit.

In terms of biological role, GTPase that plays an essential role in the late steps of ribosome biogenesis. In Pelotomaculum thermopropionicum (strain DSM 13744 / JCM 10971 / SI), this protein is GTPase Der.